We begin with the raw amino-acid sequence, 294 residues long: 4-hydroxy-tetrahydrodipicolinate synthase (294 aa).

A pyruvate-binding site is contributed by Thr45. The Proton donor/acceptor role is filled by Tyr133. The active-site Schiff-base intermediate with substrate is the Lys162. Ile204 provides a ligand contact to pyruvate.

It belongs to the DapA family. As to quaternary structure, homotetramer; dimer of dimers.

The protein resides in the cytoplasm. The catalysed reaction is L-aspartate 4-semialdehyde + pyruvate = (2S,4S)-4-hydroxy-2,3,4,5-tetrahydrodipicolinate + H2O + H(+). The protein operates within amino-acid biosynthesis; L-lysine biosynthesis via DAP pathway; (S)-tetrahydrodipicolinate from L-aspartate: step 3/4. With respect to regulation, is allosterically regulated by the feedback inhibitor (S)-lysine. In terms of biological role, catalyzes the condensation of (S)-aspartate-beta-semialdehyde [(S)-ASA] and pyruvate to 4-hydroxy-tetrahydrodipicolinate (HTPA). The protein is 4-hydroxy-tetrahydrodipicolinate synthase of Agrobacterium fabrum (strain C58 / ATCC 33970) (Agrobacterium tumefaciens (strain C58)).